The primary structure comprises 404 residues: Serine/threonine transporter SstT (404 aa).

8 helical membrane passes run 10 to 30 (ILGG…ICLA), 53 to 73 (AIAP…KEVG), 81 to 101 (ILVM…ILSY), 140 to 160 (AITN…GIAL), 177 to 197 (AVSF…FGLV), 215 to 235 (LLAV…PLLV), 287 to 307 (IAIP…ITVL), and 329 to 349 (IVAS…LLLI).

This sequence belongs to the dicarboxylate/amino acid:cation symporter (DAACS) (TC 2.A.23) family.

The protein localises to the cell inner membrane. It catalyses the reaction L-serine(in) + Na(+)(in) = L-serine(out) + Na(+)(out). It carries out the reaction L-threonine(in) + Na(+)(in) = L-threonine(out) + Na(+)(out). Its function is as follows. Involved in the import of serine and threonine into the cell, with the concomitant import of sodium (symport system). The sequence is that of Serine/threonine transporter SstT from Glaesserella parasuis serovar 5 (strain SH0165) (Haemophilus parasuis).